The following is a 209-amino-acid chain: MSKNKLSASSGRWLKEHFDDKYVLEAQKRGYRSRAIFKLEEIQNKDKLLKPGMTVVDLGAAPGGWSQYAVEQVGDSGQVIACDILAMDSIAGVSFLQGDFREEAVLDALLERIQPDMVDVVMSDMAPNMSGNPSVDQPRSMYLVELALDMCRQVLAPNGSFTVKVFQGESFDAYLQEVRKVFKVVKIRKPDSSRARSREVYIVATGYKG.

S-adenosyl-L-methionine-binding residues include glycine 63, tryptophan 65, aspartate 83, aspartate 99, and aspartate 124. Catalysis depends on lysine 164, which acts as the Proton acceptor.

The protein belongs to the class I-like SAM-binding methyltransferase superfamily. RNA methyltransferase RlmE family.

It is found in the cytoplasm. The catalysed reaction is uridine(2552) in 23S rRNA + S-adenosyl-L-methionine = 2'-O-methyluridine(2552) in 23S rRNA + S-adenosyl-L-homocysteine + H(+). Specifically methylates the uridine in position 2552 of 23S rRNA at the 2'-O position of the ribose in the fully assembled 50S ribosomal subunit. This chain is Ribosomal RNA large subunit methyltransferase E, found in Aliivibrio salmonicida (strain LFI1238) (Vibrio salmonicida (strain LFI1238)).